The following is a 267-amino-acid chain: Ribonuclease HII (267 aa).

Positions 57 to 245 (WPVAGCDEVG…VVAARERHRA (189 aa)) constitute an RNase H type-2 domain. A divalent metal cation contacts are provided by Asp63, Glu64, and Asp154.

It belongs to the RNase HII family. It depends on Mn(2+) as a cofactor. Mg(2+) serves as cofactor.

The protein localises to the cytoplasm. It catalyses the reaction Endonucleolytic cleavage to 5'-phosphomonoester.. Endonuclease that specifically degrades the RNA of RNA-DNA hybrids. The chain is Ribonuclease HII from Nitrobacter hamburgensis (strain DSM 10229 / NCIMB 13809 / X14).